The primary structure comprises 151 residues: MLAGYYPSPGDLLTRVLATGTFDILHPGHVYFLAQAKALGDELFVIIARDSNVTHKPKPVIPEEQRLEMVDALKAVNKAILGSEKDMFEPLREIKPDIIALGYDQRFDTEILEKELTKRGLPAKVVRIPLSKECPLCSTGTIIKEVLKRYG.

ATP contacts are provided by residues 21–22, 26–29, and D104; these read TF and HPGH.

This sequence belongs to the archaeal FAD synthase family. As to quaternary structure, homodimer. It depends on a divalent metal cation as a cofactor.

The enzyme catalyses FMN + ATP + H(+) = FAD + diphosphate. Its pathway is cofactor biosynthesis; FAD biosynthesis; FAD from FMN: step 1/1. In terms of biological role, catalyzes the transfer of the AMP portion of ATP to flavin mononucleotide (FMN) to produce flavin adenine dinucleotide (FAD) coenzyme. The polypeptide is FAD synthase (Methanosarcina mazei (strain ATCC BAA-159 / DSM 3647 / Goe1 / Go1 / JCM 11833 / OCM 88) (Methanosarcina frisia)).